The following is a 422-amino-acid chain: Histidine--tRNA ligase (422 aa).

It belongs to the class-II aminoacyl-tRNA synthetase family. In terms of assembly, homodimer.

The protein resides in the cytoplasm. It carries out the reaction tRNA(His) + L-histidine + ATP = L-histidyl-tRNA(His) + AMP + diphosphate + H(+). This Onion yellows phytoplasma (strain OY-M) protein is Histidine--tRNA ligase.